Consider the following 118-residue polypeptide: Large ribosomal subunit protein bL20 (118 aa).

It belongs to the bacterial ribosomal protein bL20 family.

In terms of biological role, binds directly to 23S ribosomal RNA and is necessary for the in vitro assembly process of the 50S ribosomal subunit. It is not involved in the protein synthesizing functions of that subunit. This chain is Large ribosomal subunit protein bL20, found in Cyanothece sp. (strain PCC 7425 / ATCC 29141).